Reading from the N-terminus, the 600-residue chain is Aspartate--tRNA(Asp/Asn) ligase (600 aa).

E187 provides a ligand contact to L-aspartate. Residues 211–214 are aspartate; that stretch reads QIFK. L-aspartate-binding residues include R233 and H463. 233-235 lines the ATP pocket; it reads RDE. Residue E497 participates in ATP binding. Position 504 (R504) interacts with L-aspartate. 549-552 contributes to the ATP binding site; sequence GVDR.

This sequence belongs to the class-II aminoacyl-tRNA synthetase family. Type 1 subfamily. As to quaternary structure, homodimer.

It is found in the cytoplasm. The catalysed reaction is tRNA(Asx) + L-aspartate + ATP = L-aspartyl-tRNA(Asx) + AMP + diphosphate. Its function is as follows. Aspartyl-tRNA synthetase with relaxed tRNA specificity since it is able to aspartylate not only its cognate tRNA(Asp) but also tRNA(Asn). Reaction proceeds in two steps: L-aspartate is first activated by ATP to form Asp-AMP and then transferred to the acceptor end of tRNA(Asp/Asn). This chain is Aspartate--tRNA(Asp/Asn) ligase, found in Wolbachia sp. subsp. Drosophila simulans (strain wRi).